Reading from the N-terminus, the 366-residue chain is Chorismate synthase (366 aa).

The NADP(+) site is built by arginine 48 and arginine 54. FMN-binding positions include 125-127 (RSS), 238-239 (NA), glycine 278, 293-297 (KPTSS), and arginine 319.

It belongs to the chorismate synthase family. As to quaternary structure, homotetramer. FMNH2 is required as a cofactor.

The enzyme catalyses 5-O-(1-carboxyvinyl)-3-phosphoshikimate = chorismate + phosphate. The protein operates within metabolic intermediate biosynthesis; chorismate biosynthesis; chorismate from D-erythrose 4-phosphate and phosphoenolpyruvate: step 7/7. Functionally, catalyzes the anti-1,4-elimination of the C-3 phosphate and the C-6 proR hydrogen from 5-enolpyruvylshikimate-3-phosphate (EPSP) to yield chorismate, which is the branch point compound that serves as the starting substrate for the three terminal pathways of aromatic amino acid biosynthesis. This reaction introduces a second double bond into the aromatic ring system. The polypeptide is Chorismate synthase (Burkholderia vietnamiensis (strain G4 / LMG 22486) (Burkholderia cepacia (strain R1808))).